The following is a 22-amino-acid chain: 5-methyltetrahydropteroyltriglutamate--homocysteine methyltransferase (22 aa).

It belongs to the vitamin-B12 independent methionine synthase family. Zn(2+) serves as cofactor.

It localises to the cytoplasm. It catalyses the reaction 5-methyltetrahydropteroyltri-L-glutamate + L-homocysteine = tetrahydropteroyltri-L-glutamate + L-methionine. The protein operates within amino-acid biosynthesis; L-methionine biosynthesis via de novo pathway; L-methionine from L-homocysteine (MetE route): step 1/1. Its function is as follows. Catalyzes the transfer of a methyl group from 5-methyltetrahydrofolate to homocysteine resulting in methionine formation. This is 5-methyltetrahydropteroyltriglutamate--homocysteine methyltransferase from Pseudotsuga menziesii (Douglas-fir).